The following is a 170-amino-acid chain: Zinc finger A20 and AN1 domain-containing stress-associated protein 6 (170 aa).

An A20-type zinc finger spans residues 10-44 (PESNRLCVNNCGFLGSSATMNLCSNCYGDLCLKQQ). Residues cysteine 16, cysteine 20, cysteine 32, and cysteine 35 each coordinate Zn(2+). A disordered region spans residues 53 to 76 (TVESSLSVSPPSSSSSEISSPIIP). The AN1-type zinc finger occupies 105 to 151 (QQRPNRCTTCRKRVGLTGFKCRCGTMFCGVHRYPEIHGCSYDFKSAG). Residues cysteine 111, cysteine 114, cysteine 125, cysteine 127, cysteine 132, histidine 135, histidine 141, and cysteine 143 each contribute to the Zn(2+) site.

Its function is as follows. May be involved in environmental stress response. This is Zinc finger A20 and AN1 domain-containing stress-associated protein 6 (SAP6) from Arabidopsis thaliana (Mouse-ear cress).